Reading from the N-terminus, the 296-residue chain is Protoheme IX farnesyltransferase (296 aa).

9 helical membrane-spanning segments follow: residues 11-31, 35-55, 84-104, 107-127, 132-152, 162-182, 208-228, 229-249, and 264-284; these read PGII…AAQG, YPLF…GCVF, VTLV…YVAA, LAMW…SLYM, VYGT…GYCA, LILL…IAIF, ITLY…GGYA, GYKY…MALS, and LFVF…VDSM.

Belongs to the UbiA prenyltransferase family. Protoheme IX farnesyltransferase subfamily.

It localises to the cell inner membrane. The enzyme catalyses heme b + (2E,6E)-farnesyl diphosphate + H2O = Fe(II)-heme o + diphosphate. The protein operates within porphyrin-containing compound metabolism; heme O biosynthesis; heme O from protoheme: step 1/1. In terms of biological role, converts heme B (protoheme IX) to heme O by substitution of the vinyl group on carbon 2 of heme B porphyrin ring with a hydroxyethyl farnesyl side group. The chain is Protoheme IX farnesyltransferase from Pectobacterium atrosepticum (strain SCRI 1043 / ATCC BAA-672) (Erwinia carotovora subsp. atroseptica).